A 285-amino-acid chain; its full sequence is Glutamate racemase (285 aa).

Residues 28–29 (DS) and 60–61 (YG) each bind substrate. Cysteine 92 serves as the catalytic Proton donor/acceptor. A substrate-binding site is contributed by 93-94 (NT). Cysteine 204 functions as the Proton donor/acceptor in the catalytic mechanism. 205–206 (TH) lines the substrate pocket.

It belongs to the aspartate/glutamate racemases family.

It catalyses the reaction L-glutamate = D-glutamate. Its pathway is cell wall biogenesis; peptidoglycan biosynthesis. In terms of biological role, provides the (R)-glutamate required for cell wall biosynthesis. The polypeptide is Glutamate racemase (Escherichia coli (strain UTI89 / UPEC)).